Here is a 70-residue protein sequence, read N- to C-terminus: Large ribosomal subunit protein eL38 (70 aa).

It belongs to the eukaryotic ribosomal protein eL38 family.

This is Large ribosomal subunit protein eL38 (RPL38) from Artemia franciscana (Brine shrimp).